The following is a 159-amino-acid chain: NAD(P)H-quinone oxidoreductase subunit J, chloroplastic (159 aa).

The protein belongs to the complex I 30 kDa subunit family. In terms of assembly, NDH is composed of at least 16 different subunits, 5 of which are encoded in the nucleus.

The protein localises to the plastid. It localises to the chloroplast thylakoid membrane. The catalysed reaction is a plastoquinone + NADH + (n+1) H(+)(in) = a plastoquinol + NAD(+) + n H(+)(out). It catalyses the reaction a plastoquinone + NADPH + (n+1) H(+)(in) = a plastoquinol + NADP(+) + n H(+)(out). Functionally, NDH shuttles electrons from NAD(P)H:plastoquinone, via FMN and iron-sulfur (Fe-S) centers, to quinones in the photosynthetic chain and possibly in a chloroplast respiratory chain. The immediate electron acceptor for the enzyme in this species is believed to be plastoquinone. Couples the redox reaction to proton translocation, and thus conserves the redox energy in a proton gradient. The protein is NAD(P)H-quinone oxidoreductase subunit J, chloroplastic of Agrostis stolonifera (Creeping bentgrass).